The chain runs to 318 residues: tRNA dimethylallyltransferase (318 aa).

Residue 28–35 coordinates ATP; that stretch reads GPTGAGKS. 30 to 35 is a substrate binding site; the sequence is TGAGKS. An interaction with substrate tRNA region spans residues 53–56; that stretch reads DSMQ.

It belongs to the IPP transferase family. In terms of assembly, monomer. Mg(2+) serves as cofactor.

The catalysed reaction is adenosine(37) in tRNA + dimethylallyl diphosphate = N(6)-dimethylallyladenosine(37) in tRNA + diphosphate. Catalyzes the transfer of a dimethylallyl group onto the adenine at position 37 in tRNAs that read codons beginning with uridine, leading to the formation of N6-(dimethylallyl)adenosine (i(6)A). The sequence is that of tRNA dimethylallyltransferase from Parafrankia sp. (strain EAN1pec).